The sequence spans 369 residues: UPF0284 protein AM1_5137 (369 aa).

This sequence belongs to the UPF0284 family.

This is UPF0284 protein AM1_5137 from Acaryochloris marina (strain MBIC 11017).